The following is a 496-amino-acid chain: Probable cytosol aminopeptidase (496 aa).

The Mn(2+) site is built by K264 and D269. Residue K276 is part of the active site. Residues D287, D346, and E348 each contribute to the Mn(2+) site. The active site involves R350.

The protein belongs to the peptidase M17 family. The cofactor is Mn(2+).

The protein localises to the cytoplasm. It catalyses the reaction Release of an N-terminal amino acid, Xaa-|-Yaa-, in which Xaa is preferably Leu, but may be other amino acids including Pro although not Arg or Lys, and Yaa may be Pro. Amino acid amides and methyl esters are also readily hydrolyzed, but rates on arylamides are exceedingly low.. It carries out the reaction Release of an N-terminal amino acid, preferentially leucine, but not glutamic or aspartic acids.. Its function is as follows. Presumably involved in the processing and regular turnover of intracellular proteins. Catalyzes the removal of unsubstituted N-terminal amino acids from various peptides. This is Probable cytosol aminopeptidase from Geobacter sulfurreducens (strain ATCC 51573 / DSM 12127 / PCA).